The sequence spans 167 residues: NADH-quinone oxidoreductase subunit B (167 aa).

[4Fe-4S] cluster-binding residues include cysteine 40, cysteine 41, cysteine 105, and cysteine 134.

The protein belongs to the complex I 20 kDa subunit family. As to quaternary structure, NDH-1 is composed of 14 different subunits. Subunits NuoB, C, D, E, F, and G constitute the peripheral sector of the complex. [4Fe-4S] cluster serves as cofactor.

The protein localises to the cell inner membrane. It catalyses the reaction a quinone + NADH + 5 H(+)(in) = a quinol + NAD(+) + 4 H(+)(out). In terms of biological role, NDH-1 shuttles electrons from NADH, via FMN and iron-sulfur (Fe-S) centers, to quinones in the respiratory chain. The immediate electron acceptor for the enzyme in this species is believed to be ubiquinone. Couples the redox reaction to proton translocation (for every two electrons transferred, four hydrogen ions are translocated across the cytoplasmic membrane), and thus conserves the redox energy in a proton gradient. The sequence is that of NADH-quinone oxidoreductase subunit B from Campylobacter jejuni (strain RM1221).